The sequence spans 389 residues: 26S proteasome non-ATPase regulatory subunit 6 (389 aa).

Residues 193-361 enclose the PCI domain; it reads DFKQAAELFL…EVVETNRPDS (169 aa).

The protein belongs to the proteasome subunit S10 family. In terms of assembly, component of the 19S proteasome regulatory particle complex. The 26S proteasome consists of a 20S core particle (CP) and two 19S regulatory subunits (RP). The regulatory particle is made of a lid composed of 9 subunits including PSMD6, a base containing 6 ATPases and few additional components.

Its function is as follows. Component of the 26S proteasome, a multiprotein complex involved in the ATP-dependent degradation of ubiquitinated proteins. This complex plays a key role in the maintenance of protein homeostasis by removing misfolded or damaged proteins, which could impair cellular functions, and by removing proteins whose functions are no longer required. Therefore, the proteasome participates in numerous cellular processes, including cell cycle progression, apoptosis, or DNA damage repair. This Bos taurus (Bovine) protein is 26S proteasome non-ATPase regulatory subunit 6 (PSMD6).